We begin with the raw amino-acid sequence, 119 residues long: V-type proton ATPase subunit F (119 aa).

This sequence belongs to the V-ATPase F subunit family. As to quaternary structure, V-ATPase is a heteromultimeric enzyme made up of two complexes: the ATP-hydrolytic V1 complex and the proton translocation V0 complex. The V1 complex consists of three catalytic AB heterodimers that form a heterohexamer, three peripheral stalks each consisting of EG heterodimers, one central rotor including subunits D and F, and the regulatory subunits C and H. The proton translocation complex V0 consists of the proton transport subunit a, a ring of proteolipid subunits c9c'', rotary subunit d, subunits e and f, and the accessory subunits ATP6AP1/Ac45 and ATP6AP2/PRR. In terms of tissue distribution, expressed in brain (at protein level).

It localises to the cytoplasmic vesicle. Its subcellular location is the secretory vesicle. The protein resides in the synaptic vesicle membrane. The protein localises to the clathrin-coated vesicle membrane. Its function is as follows. Subunit of the V1 complex of vacuolar(H+)-ATPase (V-ATPase), a multisubunit enzyme composed of a peripheral complex (V1) that hydrolyzes ATP and a membrane integral complex (V0) that translocates protons. V-ATPase is responsible for acidifying and maintaining the pH of intracellular compartments and in some cell types, is targeted to the plasma membrane, where it is responsible for acidifying the extracellular environment. In Bos taurus (Bovine), this protein is V-type proton ATPase subunit F (ATP6V1F).